The chain runs to 383 residues: Serine protease 23 (383 aa).

The N-terminal stretch at 1–19 (MAGIPGLLFLLFLLLCAVG) is a signal peptide. The N-linked (GlcNAc...) asparagine glycan is linked to Asn93. The disordered stretch occupies residues 108-127 (SSGGGAQHRDSGSSGKSRRK). A Phosphoserine; by FAM20C modification is found at Ser109. Cys160 and Cys176 are oxidised to a cystine. Catalysis depends on His175, which acts as the Charge relay system. N-linked (GlcNAc...) asparagine glycosylation is present at Asn207. Catalysis depends on charge relay system residues Asp240 and Ser316.

It belongs to the peptidase S1 family.

It is found in the secreted. The sequence is that of Serine protease 23 (PRSS23) from Macaca mulatta (Rhesus macaque).